The following is a 444-amino-acid chain: Maintenance of mitochondrial morphology protein 1 (444 aa).

Residues 1-110 (MNNLDNLAGN…SFSGWSFIEG (110 aa)) are Lumenal-facing. Residues 111-131 (FIIGQFSVIIVLIFFIKFFVF) form a helical membrane-spanning segment. Over 132-444 (SDGSSSNSSN…TDDVPLSKAE (313 aa)) the chain is Cytoplasmic. In terms of domain architecture, SMP-LTD spans 207-419 (PSESLDWFNV…EPRFQCIRLP (213 aa)).

The protein belongs to the MMM1 family. Homodimer. Component of the ER-mitochondria encounter structure (ERMES) or MDM complex, composed of MMM1, MDM10, MDM12 and MDM34. An MMM1 homodimer associates with one molecule of MDM12 on each side in a pairwise head-to-tail manner, and the SMP-LTD domains of MMM1 and MDM12 generate a continuous hydrophobic tunnel for phospholipid trafficking.

Its subcellular location is the endoplasmic reticulum membrane. Functionally, component of the ERMES/MDM complex, which serves as a molecular tether to connect the endoplasmic reticulum (ER) and mitochondria. Components of this complex are involved in the control of mitochondrial shape and protein biogenesis, and function in nonvesicular lipid trafficking between the ER and mitochondria. The MDM12-MMM1 subcomplex functions in the major beta-barrel assembly pathway that is responsible for biogenesis of all outer membrane beta-barrel proteins, and acts in a late step after the SAM complex. The MDM10-MDM12-MMM1 subcomplex further acts in the TOM40-specific pathway after the action of the MDM12-MMM1 complex. Essential for establishing and maintaining the structure of mitochondria and maintenance of mtDNA nucleoids. The polypeptide is Maintenance of mitochondrial morphology protein 1 (Vanderwaltozyma polyspora (strain ATCC 22028 / DSM 70294 / BCRC 21397 / CBS 2163 / NBRC 10782 / NRRL Y-8283 / UCD 57-17) (Kluyveromyces polysporus)).